The following is a 329-amino-acid chain: Probable tyrosine--tRNA ligase, cytoplasmic (329 aa).

Tyr-35 contributes to the L-tyrosine binding site. The short motif at 40–48 (TTGKPHIAY) is the 'HIGH' region element. The L-tyrosine site is built by Tyr-162, Gln-166, Asp-169, and Gln-184. Positions 218-222 (KMSSS) match the 'KMSKS' region motif.

The protein belongs to the class-I aminoacyl-tRNA synthetase family. Homodimer.

The protein resides in the cytoplasm. It carries out the reaction tRNA(Tyr) + L-tyrosine + ATP = L-tyrosyl-tRNA(Tyr) + AMP + diphosphate + H(+). This chain is Probable tyrosine--tRNA ligase, cytoplasmic, found in Vairimorpha ceranae (strain BRL01) (Microsporidian parasite).